A 900-amino-acid polypeptide reads, in one-letter code: Vacuolar membrane protein pep3 (900 aa).

Residues 1 to 20 (MSLAEDWIDPNSSEDSDIQE) are disordered. TPR repeat units lie at residues 314 to 345 (HLAF…SPHE), 373 to 406 (NNET…NTVL), 408 to 436 (GYAE…VEEV), and 546 to 579 (MKDQ…ETLI). The CHCR repeat unit spans residues 602–756 (DLDVHALIPS…MFSKKSGIKE (155 aa)). Residues 837 to 884 (CWHCNQPLFSEPFVLFPCQHAFHRSCMLEKTYKLASEKNILKECQLCG) form an RING-type; atypical zinc finger.

Belongs to the VPS18 family.

Its subcellular location is the vacuole membrane. Its function is as follows. Required for vacuolar biogenesis. In Schizosaccharomyces pombe (strain 972 / ATCC 24843) (Fission yeast), this protein is Vacuolar membrane protein pep3 (pep3).